The chain runs to 262 residues: Oxidoreductase AgnL4 (262 aa).

The protein belongs to the avfA family.

It functions in the pathway secondary metabolite biosynthesis. Functionally, oxidoreductase; part of the gene cluster that mediates the biosynthesis of agnestins, dihydroxy-xanthone metabolites. The pathway begins with the assembly and cyclization of atrochrysone thioester by the non-reducing polyketide synthase Agnpks1. The atrochrysone carboxyl ACP thioesterase AgnL7 then breaks the thioester bond and releases the atrochrysone carboxylic acid as the first enzyme-free intermediate. The decarboxylase AgnL1 then catalyzes the concerted decarboxylation-elimination required to convert atochrysone carboxylic acid into emodin anthrone, which is further oxidized to emodin by the anthrone oxygenase AgnL2. Emodin then undergoes reduction catalyzed by the oxidoreductase AgnL4 to yield the dihydroquinone tautomer which is the substrate for reduction by the short chain dehydrogenase AgnL6 reduction to produce hydroxyketone, followed by AgnL8 dehydration and likely spontaneous autoxidation to chrysophanol. Baeyer-Villiger oxidation by the oxidase AgnL3 leads to monodictyphenone via cleavage of the C-10/C-10a bond of chrysophanol. Alternative cleavage at the C-4a/C-10 bond of chrysophanol also leads to the formation some cephalone F. Further conversion to agnestins A and B, requires reduction to dihydro-monodictyphenone, oxidation to agnestin C probably via an epoxide, and rearrangement to either agnestin A or agnestin B directly, although agnestin A or agnestin B can also interconvert. Within the cluster, AgnR1 is the only unassigned oxidoreductase present which could be involved in this conversion. However, AgnR1 seems not to be involved in this step, and thus genes involved in the proposed oxidation/reduction may be located elsewhere on the genome. Further agnestin A derivatives are probably formed by spontaneous decarboxylations, dehydrations and methanolysis reactions. The protein is Oxidoreductase AgnL4 of Paecilomyces divaricatus (Penicillium divaricatum).